The following is a 180-amino-acid chain: Hypoxanthine-guanine phosphoribosyltransferase (180 aa).

Residues lysine 43 and glycine 44 each contribute to the diphosphate site. Mg(2+) contacts are provided by glutamate 99 and aspartate 100. The Proton acceptor role is filled by aspartate 103. GMP contacts are provided by residues lysine 131, 152–153 (FI), and aspartate 159. Residue arginine 165 participates in diphosphate binding.

The protein belongs to the purine/pyrimidine phosphoribosyltransferase family. It depends on Mg(2+) as a cofactor.

The protein resides in the cytoplasm. The catalysed reaction is IMP + diphosphate = hypoxanthine + 5-phospho-alpha-D-ribose 1-diphosphate. It carries out the reaction GMP + diphosphate = guanine + 5-phospho-alpha-D-ribose 1-diphosphate. It participates in purine metabolism; IMP biosynthesis via salvage pathway; IMP from hypoxanthine: step 1/1. Its pathway is purine metabolism; GMP biosynthesis via salvage pathway; GMP from guanine: step 1/1. Purine salvage pathway enzyme that catalyzes the transfer of the ribosyl-5-phosphate group from 5-phospho-alpha-D-ribose 1-diphosphate (PRPP) to the N9 position of the 6-oxopurines hypoxanthine and guanine to form the corresponding ribonucleotides IMP (inosine 5'-monophosphate) and GMP (guanosine 5'-monophosphate), with the release of PPi. In Streptococcus agalactiae serotype III (strain NEM316), this protein is Hypoxanthine-guanine phosphoribosyltransferase (hpt).